The following is a 670-amino-acid chain: DUF724 domain-containing protein 1 (670 aa).

Disordered stretches follow at residues 283–315 (HNGP…PMTP) and 368–445 (ANAE…NNDD). 3 stretches are compositionally biased toward polar residues: residues 294–309 (SPSN…SSSG), 379–392 (RNQN…TQQM), and 426–442 (CNGS…SICN). The DUF724 domain occupies 484-669 (PFAKKLPFWK…LEFQTTVSTP (186 aa)).

As to expression, expressed in stems and flowers.

The protein resides in the nucleus. May be involved in the polar growth of plant cells via transportation of RNAs. The protein is DUF724 domain-containing protein 1 of Arabidopsis thaliana (Mouse-ear cress).